Here is a 489-residue protein sequence, read N- to C-terminus: MAAEFIKSCCRGCLYGETEKQKFSVDRDFKASASSSQNTIGIPPLTSVLVKPQVGCNEDYLLSKLPCDGKEVQFVVPRFKLSYIQPRTQGIPSHLDELEGSARASFGDQKTELCSSFYHGPSYDVYNPCYMYQHFSPDLSRRFLPHCETKQLYGSVCDLRTSKLPGSSGLSKSMLDLTTSSQRFIQRHDSFSSVPSSSSSRKNSQGSNRSLDTITLSGDERDLGRLNVKLFYNSSAEQIWITVLQCRDISWPSSYGDTPTISIKGILTLSKPVHFKSSAKEGSNAIEFMETFVFAIKLQNLQAVRLAFKIQTQTPKKKTIGECSLSLRTLSTQEMEYSLEIIAPSKISVCQAELELGTCFQAVNSRIQLQILEAQYLPSSSTPLTLSFFVKVGMFSSGELIYKKKTRLLKASSGRVKWGETMIFPLIQTEKEIVFLIKLYSRSSVRRKHFVGQLWISEDSNNIEAVNQWKETITNPEKVVIKWHKLNPS.

5 positions are modified to phosphoserine: serine 82, serine 155, serine 167, serine 173, and serine 210. The segment at 189 to 214 (DSFSSVPSSSSSRKNSQGSNRSLDTI) is disordered. Low complexity predominate over residues 191–210 (FSSVPSSSSSRKNSQGSNRS). Threonine 213 and threonine 215 each carry phosphothreonine. Position 217 is a phosphoserine (serine 217). C2 domains follow at residues 222-341 (DLGR…SLEI) and 343-470 (APSK…NQWK). The Nuclear localization signal signature appears at 446–448 (RRK).

The protein localises to the nucleus. The polypeptide is Tandem C2 domains nuclear protein (Tc2n) (Mus musculus (Mouse)).